The following is a 932-amino-acid chain: GPI ethanolamine phosphate transferase 1 (932 aa).

Topologically, residues 1-8 are cytoplasmic; it reads MISLNKKL. Residues 9–29 traverse the membrane as a helical segment; sequence VLLVGVIFHVAFMWSIFDIYF. Over 30–456 the chain is Lumenal; sequence VSPLIHGMKH…TYNWLFLRTL (427 aa). N-linked (GlcNAc...) asparagine glycans are attached at residues asparagine 138, asparagine 202, and asparagine 360. The helical transmembrane segment at 457-477 threads the bilayer; it reads VTIGFFGWIAVAFCSYLLAFV. Over 478 to 486 the chain is Cytoplasmic; sequence VQSDKPFTT. Residues 487 to 507 form a helical membrane-spanning segment; the sequence is SLPLKGVAYVALAILSGFFVF. The Lumenal segment spans residues 508–509; sequence QK. A helical transmembrane segment spans residues 510 to 530; the sequence is SPLHYHLYAVFPVVFWEAVLQ. At 531–551 the chain is on the cytoplasmic side; that stretch reads RRTAVAEGISILARRSTSKAP. The helical transmembrane segment at 552-572 threads the bilayer; the sequence is ALAAILDIGLSLVLLEAIVYG. Residues 573-577 are Lumenal-facing; the sequence is YFHRE. A helical membrane pass occupies residues 578 to 598; the sequence is IFSVCFGLATLWPFVHNFTVA. At 599–603 the chain is on the cytoplasmic side; that stretch reads KREWP. The helical transmembrane segment at 604–624 threads the bilayer; the sequence is TTLAWVVMCAIMSSFTLLEVV. The Lumenal segment spans residues 625-627; it reads KVE. The helical transmembrane segment at 628–648 threads the bilayer; that stretch reads SIEQILLSGALMLVIGLVFTI. Residues 649 to 653 are Cytoplasmic-facing; that stretch reads HLQRK. A helical transmembrane segment spans residues 654–674; sequence LALAASTVCVLFAQILLVVAT. Residues 675–696 lie on the Lumenal side of the membrane; it reads MYFTRESVESLTARNGLPLFSQ. A helical transmembrane segment spans residues 697–717; it reads VGGWISLLLSLAVPFLHFLGS. Topologically, residues 718-737 are cytoplasmic; sequence DAKDYRLRLLIIFLAFGPTF. Residues 738 to 758 form a helical membrane-spanning segment; the sequence is VILTISWEGFFYVCFFAILVI. Residues 759–786 lie on the Lumenal side of the membrane; the sequence is WIELETQMRDARVTPQTRADLTPGDFRM. A helical transmembrane segment spans residues 787 to 807; it reads ALFTFFMSQIGFFGIGNIASI. Residues 808 to 828 lie on the Cytoplasmic side of the membrane; it reads SSFSLDSVYRLIPVFDPFSMG. A helical transmembrane segment spans residues 829–849; it reads ALLMFKILVPFAVLSACLGIL. The Lumenal portion of the chain corresponds to 850–859; the sequence is NLKLGVPPSA. Residues 860–880 form a helical membrane-spanning segment; it reads LFSMVLCVSDILTLNFFYLVV. The Cytoplasmic segment spans residues 881-900; the sequence is DEGSWLDIGTGISHYCIASG. The chain crosses the membrane as a helical span at residues 901–921; the sequence is LSLFMMVLEYLSGVLVAGVTI. Topologically, residues 922–932 are lumenal; that stretch reads APHVSKIKKDM.

The protein belongs to the PIGG/PIGN/PIGO family. PIGN subfamily.

Its subcellular location is the endoplasmic reticulum membrane. Its pathway is glycolipid biosynthesis; glycosylphosphatidylinositol-anchor biosynthesis. Ethanolamine phosphate transferase involved in glycosylphosphatidylinositol-anchor biosynthesis. Transfers ethanolamine phosphate to the first alpha-1,4-linked mannose of the glycosylphosphatidylinositol precursor of GPI-anchor. In Yarrowia lipolytica (strain CLIB 122 / E 150) (Yeast), this protein is GPI ethanolamine phosphate transferase 1 (MCD4).